Here is a 306-residue protein sequence, read N- to C-terminus: Protein translocase subunit SecF (306 aa).

The next 6 membrane-spanning stretches (helical) occupy residues 17–37, 134–154, 158–178, 185–205, 232–254, and 268–288; these read AFAV…TKGI, GLGM…RFQW, LGAI…LSFF, TVLA…IVIF, LLRT…FFGG, and VMAG…WLNL.

This sequence belongs to the SecD/SecF family. SecF subfamily. As to quaternary structure, forms a complex with SecD. Part of the essential Sec protein translocation apparatus which comprises SecA, SecYEG and auxiliary proteins SecDF-YajC and YidC.

It is found in the cell inner membrane. Part of the Sec protein translocase complex. Interacts with the SecYEG preprotein conducting channel. SecDF uses the proton motive force (PMF) to complete protein translocation after the ATP-dependent function of SecA. The chain is Protein translocase subunit SecF from Pseudomonas aeruginosa (strain ATCC 15692 / DSM 22644 / CIP 104116 / JCM 14847 / LMG 12228 / 1C / PRS 101 / PAO1).